Consider the following 485-residue polypeptide: Aspartyl/glutamyl-tRNA(Asn/Gln) amidotransferase subunit B (485 aa).

Belongs to the GatB/GatE family. GatB subfamily. As to quaternary structure, heterotrimer of A, B and C subunits.

It carries out the reaction L-glutamyl-tRNA(Gln) + L-glutamine + ATP + H2O = L-glutaminyl-tRNA(Gln) + L-glutamate + ADP + phosphate + H(+). The catalysed reaction is L-aspartyl-tRNA(Asn) + L-glutamine + ATP + H2O = L-asparaginyl-tRNA(Asn) + L-glutamate + ADP + phosphate + 2 H(+). Functionally, allows the formation of correctly charged Asn-tRNA(Asn) or Gln-tRNA(Gln) through the transamidation of misacylated Asp-tRNA(Asn) or Glu-tRNA(Gln) in organisms which lack either or both of asparaginyl-tRNA or glutaminyl-tRNA synthetases. The reaction takes place in the presence of glutamine and ATP through an activated phospho-Asp-tRNA(Asn) or phospho-Glu-tRNA(Gln). The chain is Aspartyl/glutamyl-tRNA(Asn/Gln) amidotransferase subunit B from Borrelia recurrentis (strain A1).